Reading from the N-terminus, the 252-residue chain is Indole-3-glycerol phosphate synthase (252 aa).

The protein belongs to the TrpC family.

The catalysed reaction is 1-(2-carboxyphenylamino)-1-deoxy-D-ribulose 5-phosphate + H(+) = (1S,2R)-1-C-(indol-3-yl)glycerol 3-phosphate + CO2 + H2O. It functions in the pathway amino-acid biosynthesis; L-tryptophan biosynthesis; L-tryptophan from chorismate: step 4/5. In Listeria monocytogenes serotype 4b (strain CLIP80459), this protein is Indole-3-glycerol phosphate synthase.